The chain runs to 324 residues: Beta-ketoacyl-[acyl-carrier-protein] synthase III (324 aa).

Residues C114 and H251 contribute to the active site. Residues 252 to 256 form an ACP-binding region; that stretch reads QANLR. N281 is a catalytic residue.

This sequence belongs to the thiolase-like superfamily. FabH family. In terms of assembly, homodimer.

Its subcellular location is the cytoplasm. The catalysed reaction is malonyl-[ACP] + acetyl-CoA + H(+) = 3-oxobutanoyl-[ACP] + CO2 + CoA. The protein operates within lipid metabolism; fatty acid biosynthesis. In terms of biological role, catalyzes the condensation reaction of fatty acid synthesis by the addition to an acyl acceptor of two carbons from malonyl-ACP. Catalyzes the first condensation reaction which initiates fatty acid synthesis and may therefore play a role in governing the total rate of fatty acid production. Possesses both acetoacetyl-ACP synthase and acetyl transacylase activities. Its substrate specificity determines the biosynthesis of branched-chain and/or straight-chain of fatty acids. The protein is Beta-ketoacyl-[acyl-carrier-protein] synthase III of Rhodobacter capsulatus (Rhodopseudomonas capsulata).